A 540-amino-acid polypeptide reads, in one-letter code: Zinc finger CCCH domain-containing protein 46 (540 aa).

The C3H1-type zinc-finger motif lies at Gly148–Gly175. The RRM domain maps to Arg258–Lys334. 2 stretches are compositionally biased toward basic and acidic residues: residues Val337–Leu351 and Glu436–Gly450. Disordered regions lie at residues Val337–Gly365, Glu436–Ser469, and Ser490–Ser514. Residue Ser451 is modified to Phosphoserine. Low complexity predominate over residues Ser490–Ser511.

Functionally, possesses RNA-binding and ribonuclease activities in vitro. The protein is Zinc finger CCCH domain-containing protein 46 of Arabidopsis thaliana (Mouse-ear cress).